Reading from the N-terminus, the 352-residue chain is Quinolinate synthase (352 aa).

2 residues coordinate iminosuccinate: H48 and S69. C114 lines the [4Fe-4S] cluster pocket. Iminosuccinate contacts are provided by residues 140-142 and S157; that span reads YAN. C201 contributes to the [4Fe-4S] cluster binding site. Residues 227-229 and T244 each bind iminosuccinate; that span reads HPE. [4Fe-4S] cluster is bound at residue C298.

It belongs to the quinolinate synthase family. Type 1 subfamily. [4Fe-4S] cluster serves as cofactor.

The protein localises to the cytoplasm. It carries out the reaction iminosuccinate + dihydroxyacetone phosphate = quinolinate + phosphate + 2 H2O + H(+). It participates in cofactor biosynthesis; NAD(+) biosynthesis; quinolinate from iminoaspartate: step 1/1. Its function is as follows. Catalyzes the condensation of iminoaspartate with dihydroxyacetone phosphate to form quinolinate. The polypeptide is Quinolinate synthase (Pseudomonas fluorescens (strain Pf0-1)).